Here is a 513-residue protein sequence, read N- to C-terminus: Probable DNA ligase (513 aa).

Glu215 contacts ATP. Residue Lys217 is the N6-AMP-lysine intermediate of the active site. Positions 222, 237, 266, 306, 378, and 384 each coordinate ATP.

This sequence belongs to the ATP-dependent DNA ligase family. Mg(2+) is required as a cofactor.

It catalyses the reaction ATP + (deoxyribonucleotide)n-3'-hydroxyl + 5'-phospho-(deoxyribonucleotide)m = (deoxyribonucleotide)n+m + AMP + diphosphate.. In terms of biological role, DNA ligase that seals nicks in double-stranded DNA during DNA replication, DNA recombination and DNA repair. This is Probable DNA ligase from Mycobacterium marinum (strain ATCC BAA-535 / M).